A 277-amino-acid chain; its full sequence is MTKPTSTADKSLLGQTTPYCQAYDPTILFPIPRQEKRDELGFDLKTLPFTGEDVWTGYEISWLNLKGKPQVGWAEFVFSAEAPNLIESKSFKLYLNSFNGTRFESEDAVIACWQNDLSQACGKPVGVRFYRLDESIVLQGNLPGHCLDALDIEVEDYQVNPDLLHTDSDQIVSETLNSHLLKSNCLVTGQPDWGSIVVRYEGAQINHEALLKYLISFREHNEFHEQCVERVFTDIMRFCQPKKLTVYARYLRRGGLDINPYRSNYEQVFDRARLVRQ.

86–88 lines the substrate pocket; the sequence is IES. 88-89 contributes to the NADPH binding site; it reads SK. Cysteine 185 acts as the Thioimide intermediate in catalysis. Residue aspartate 192 is the Proton donor of the active site. 224–225 provides a ligand contact to substrate; it reads HE. NADPH is bound at residue 253-254; that stretch reads RG.

The protein belongs to the GTP cyclohydrolase I family. QueF type 2 subfamily. Homodimer.

Its subcellular location is the cytoplasm. It carries out the reaction 7-aminomethyl-7-carbaguanine + 2 NADP(+) = 7-cyano-7-deazaguanine + 2 NADPH + 3 H(+). It participates in tRNA modification; tRNA-queuosine biosynthesis. In terms of biological role, catalyzes the NADPH-dependent reduction of 7-cyano-7-deazaguanine (preQ0) to 7-aminomethyl-7-deazaguanine (preQ1). The protein is NADPH-dependent 7-cyano-7-deazaguanine reductase of Hydrogenovibrio crunogenus (strain DSM 25203 / XCL-2) (Thiomicrospira crunogena).